An 89-amino-acid polypeptide reads, in one-letter code: Small ribosomal subunit protein uS19 (89 aa).

Belongs to the universal ribosomal protein uS19 family.

In terms of biological role, protein S19 forms a complex with S13 that binds strongly to the 16S ribosomal RNA. The sequence is that of Small ribosomal subunit protein uS19 from Bacteroides thetaiotaomicron (strain ATCC 29148 / DSM 2079 / JCM 5827 / CCUG 10774 / NCTC 10582 / VPI-5482 / E50).